A 198-amino-acid polypeptide reads, in one-letter code: Putative 3-methyladenine DNA glycosylase (198 aa).

The protein belongs to the DNA glycosylase MPG family.

The chain is Putative 3-methyladenine DNA glycosylase from Rhizobium johnstonii (strain DSM 114642 / LMG 32736 / 3841) (Rhizobium leguminosarum bv. viciae).